The primary structure comprises 642 residues: Threonine--tRNA ligase (642 aa).

The TGS domain maps to 1–61; that stretch reads MPIITLPDGS…EEDASLEIIT (61 aa). A catalytic region spans residues 244–535; sequence DHRKIGKQLD…LIEEYAGFFP (292 aa). Residues Cys-335, His-386, and His-512 each coordinate Zn(2+).

Belongs to the class-II aminoacyl-tRNA synthetase family. Homodimer. Zn(2+) serves as cofactor.

It localises to the cytoplasm. The enzyme catalyses tRNA(Thr) + L-threonine + ATP = L-threonyl-tRNA(Thr) + AMP + diphosphate + H(+). In terms of biological role, catalyzes the attachment of threonine to tRNA(Thr) in a two-step reaction: L-threonine is first activated by ATP to form Thr-AMP and then transferred to the acceptor end of tRNA(Thr). Also edits incorrectly charged L-seryl-tRNA(Thr). The polypeptide is Threonine--tRNA ligase (Vibrio parahaemolyticus serotype O3:K6 (strain RIMD 2210633)).